We begin with the raw amino-acid sequence, 165 residues long: DELTA-actitoxin-Oor1a (165 aa).

Residues A1–S17 form an N-terminal region region. 5 residues coordinate phosphocholine: S41, V74, S92, P94, and Y125. The segment at S92–K107 is trp-rich region, which is important for the binding to lipid membrane.

The protein belongs to the actinoporin family. Sea anemone subfamily. In terms of assembly, octamer or nonamer in membranes. Monomer in the soluble state.

The protein resides in the secreted. It is found in the nematocyst. Its subcellular location is the target cell membrane. In terms of biological role, pore-forming protein that forms cations-selective hydrophilic pores of around 1 nm and causes cardiac stimulation and cytolysis. Pore formation is a multi-step process that involves specific recognition of membrane sphingomyelin (but neither cholesterol nor phosphatidylcholine) using aromatic rich region and adjacent phosphocholine (POC) binding site, firm binding to the membrane (mainly driven by hydrophobic interactions) accompanied by the transfer of the N-terminal region to the lipid-water interface and finally pore formation after oligomerization of monomers. Cytolytic effects include red blood cells hemolysis, platelet aggregation and lysis, cytotoxic and cytostatic effects on fibroblasts. Lethality in mammals has been ascribed to severe vasospasm of coronary vessels, cardiac arrhythmia, and inotropic effects. In Oulactis orientalis (Japan anemone), this protein is DELTA-actitoxin-Oor1a.